Here is a 134-residue protein sequence, read N- to C-terminus: ATP synthase epsilon chain (134 aa).

This sequence belongs to the ATPase epsilon chain family. As to quaternary structure, F-type ATPases have 2 components, CF(1) - the catalytic core - and CF(0) - the membrane proton channel. CF(1) has five subunits: alpha(3), beta(3), gamma(1), delta(1), epsilon(1). CF(0) has three main subunits: a, b and c.

The protein localises to the cell membrane. Its function is as follows. Produces ATP from ADP in the presence of a proton gradient across the membrane. This Listeria monocytogenes serotype 4b (strain F2365) protein is ATP synthase epsilon chain.